The chain runs to 353 residues: Soluble interferon alpha/beta receptor OPG204 (353 aa).

The signal sequence occupies residues 1 to 21 (MTMKMMVHIYFVSLSLLLLLF). Ig-like C2-type domains follow at residues 67–139 (LGEP…KNGD) and 157–239 (PKTY…IVVS). 2 disulfide bridges follow: C75-C131 and C174-C223. N119, N184, N263, N271, and N323 each carry an N-linked (GlcNAc...) asparagine; by host glycan. The Ig-like V-type domain maps to 248–347 (PSQDHRFKLI…HNYYFEKTLT (100 aa)). A disulfide bridge connects residues C274 and C335.

It belongs to the interleukin-1 receptor family. As to quaternary structure, interacts with host IFNA1.

It is found in the secreted. Its function is as follows. Counteracts the antiviral effects of host IFN-alpha/beta and key IFN-inducible proteins involved in viral RNA degradation suxh as host OAS1. Acts as a soluble IFN-alpha receptor and thus inhibits the interaction between host IFN-alpha and its receptor. In Homo sapiens (Human), this protein is Soluble interferon alpha/beta receptor OPG204 (OPG204).